We begin with the raw amino-acid sequence, 163 residues long: Phosphopantetheine adenylyltransferase (163 aa).

Ser11 is a binding site for substrate. Residues 11–12 (SF) and His19 contribute to the ATP site. Substrate contacts are provided by Lys43, Leu75, and Arg89. ATP-binding positions include 90 to 92 (GLR), Glu100, and 125 to 131 (YSFLSSS).

The protein belongs to the bacterial CoaD family. As to quaternary structure, homohexamer. It depends on Mg(2+) as a cofactor.

It localises to the cytoplasm. The catalysed reaction is (R)-4'-phosphopantetheine + ATP + H(+) = 3'-dephospho-CoA + diphosphate. Its pathway is cofactor biosynthesis; coenzyme A biosynthesis; CoA from (R)-pantothenate: step 4/5. Reversibly transfers an adenylyl group from ATP to 4'-phosphopantetheine, yielding dephospho-CoA (dPCoA) and pyrophosphate. The chain is Phosphopantetheine adenylyltransferase from Lysinibacillus sphaericus (strain C3-41).